The primary structure comprises 651 residues: Acetyl-coenzyme A synthetase (651 aa).

Residues 189-192 (RGGK), threonine 311, and asparagine 335 each bind CoA. ATP-binding positions include 387 to 389 (GEP), 411 to 416 (DTWWQT), aspartate 500, and arginine 515. Serine 523 contacts CoA. Arginine 526 serves as a coordination point for ATP. Residues valine 537, histidine 539, and valine 542 each coordinate Mg(2+). Arginine 586 provides a ligand contact to CoA. Lysine 611 bears the N6-acetyllysine mark.

It belongs to the ATP-dependent AMP-binding enzyme family. Mg(2+) serves as cofactor. Acetylated. Deacetylation by the SIR2-homolog deacetylase activates the enzyme.

It catalyses the reaction acetate + ATP + CoA = acetyl-CoA + AMP + diphosphate. Its function is as follows. Catalyzes the conversion of acetate into acetyl-CoA (AcCoA), an essential intermediate at the junction of anabolic and catabolic pathways. AcsA undergoes a two-step reaction. In the first half reaction, AcsA combines acetate with ATP to form acetyl-adenylate (AcAMP) intermediate. In the second half reaction, it can then transfer the acetyl group from AcAMP to the sulfhydryl group of CoA, forming the product AcCoA. This is Acetyl-coenzyme A synthetase from Brucella melitensis biotype 1 (strain ATCC 23456 / CCUG 17765 / NCTC 10094 / 16M).